Consider the following 1304-residue polypeptide: Angiotensin-converting enzyme (1304 aa).

A signal peptide spans 1-27; sequence MGAASGRRGPGLLLPLLLLLPPQPALA. Over 28 to 1257 the chain is Extracellular; it reads LDPGLQPGNF…LDAQQARVGQ (1230 aa). Residues Asn-36, Asn-52, Asn-72, Asn-109, Asn-144, and Asn-158 are each glycosylated (N-linked (GlcNAc...) asparagine). 2 consecutive Peptidase M2 domains span residues 38 to 622 and 641 to 1220; these read SADE…LGWP and VTDE…LGWP. Cys-155 and Cys-163 are oxidised to a cystine. Tyr-229 is a binding site for chloride. Asn-316 carries an N-linked (GlcNAc...) asparagine glycan. Cys-357 and Cys-375 are oxidised to a cystine. His-388 contributes to the Zn(2+) binding site. Glu-389 (proton acceptor 1) is an active-site residue. 2 residues coordinate Zn(2+): His-392 and Glu-416. N-linked (GlcNAc...) asparagine glycosylation is found at Asn-440, Asn-443, and Asn-507. The active-site Proton donor 1 is the His-518. Arg-527 contributes to the chloride binding site. An intrachain disulfide couples Cys-543 to Cys-555. Asn-675 is a glycosylation site (N-linked (GlcNAc...) asparagine). 2 N-linked (GlcNAc...) (complex) asparagine glycosylation sites follow: Asn-693 and Asn-712. A disulfide bridge connects residues Cys-755 and Cys-761. N-linked (GlcNAc...) asparagine glycosylation occurs at Asn-758. Arg-789 and Tyr-827 together coordinate chloride. Asn-940 carries an N-linked (GlcNAc...) asparagine glycan. Residues Cys-955 and Cys-973 are joined by a disulfide bond. His-986 is a Zn(2+) binding site. Glu-987 acts as the Proton acceptor 2 in catalysis. Residues His-990 and Glu-1014 each coordinate Zn(2+). Chloride contacts are provided by Trp-1088 and Arg-1092. His-1116 functions as the Proton donor 2 in the catalytic mechanism. Arg-1125 contributes to the chloride binding site. Residues Cys-1141 and Cys-1153 are joined by a disulfide bond. The N-linked (GlcNAc...) asparagine glycan is linked to Asn-1189. A juxtamembrane stalk region spans residues 1213-1254; that stretch reads HGEKLGWPQYNWTPNSARSEGPLPDSGRVSFLGLDLDAQQAR. A helical membrane pass occupies residues 1258-1274; it reads WLLLFLGIALLVATLGL. Residues 1275 to 1304 lie on the Cytoplasmic side of the membrane; that stretch reads SQRLFSIRHRSLHRHSHGPQFDSEVELRHS. Position 1297 is a phosphoserine (Ser-1297).

It belongs to the peptidase M2 family. In terms of assembly, monomer and homodimer; homodimerizes following binding to an inhibitor. Interacts with calmodulin (CALM1, CALM2 or CALM3); interaction takes place in the cytoplasmic region and regulates phosphorylation and proteolytic cleavage. Requires Zn(2+) as cofactor. Chloride serves as cofactor. Post-translationally, produced following proteolytic cleavage by secretase enzymes that cleave the transmembrane form in the juxtamembrane stalk region upstream of the transmembrane region. Cleavage can take place at different sites of the juxtamembrane stalk region. Phosphorylated by CK2 on Ser-1297; which allows membrane retention. Phosphorylated on tyrosine residues on its extracellular part, promoting cleavage by secretase enzymes and formation of the soluble form (Angiotensin-converting enzyme, soluble form).

It is found in the cell membrane. It localises to the cytoplasm. The protein resides in the secreted. The enzyme catalyses Release of a C-terminal dipeptide, oligopeptide-|-Xaa-Yaa, when Xaa is not Pro, and Yaa is neither Asp nor Glu. Thus, conversion of angiotensin I to angiotensin II, with increase in vasoconstrictor activity, but no action on angiotensin II.. It catalyses the reaction angiotensin I + H2O = L-histidyl-L-leucine + angiotensin II. It carries out the reaction bradykinin + H2O = L-Phe-L-Arg + bradykinin(1-7). The catalysed reaction is substance P + H2O = substance P(1-9) + L-Leu-L-Met-NH2. The enzyme catalyses substance P + H2O = substance P(1-8) + Gly-L-Leu-L-Met-NH2. It catalyses the reaction substance P + H2O = L-Phe-L-Phe-Gly-L-Leu-L-Met-NH2 + substance P(1-6). It carries out the reaction neurotensin + H2O = neurotensin(1-11) + L-isoleucyl-L-leucine. The catalysed reaction is goralatide + H2O = N-acetyl-L-seryl-L-aspartate + L-lysyl-L-proline. The enzyme catalyses Met-enkephalin + H2O = L-phenylalanyl-L-methionine + L-tyrosylglycylglycine. It catalyses the reaction Leu-enkephalin + H2O = L-tyrosylglycylglycine + L-phenylalanyl-L-leucine. It carries out the reaction Met-enkephalin-Arg-Phe + H2O = L-arginyl-L-phenylalanine + Met-enkephalin. With respect to regulation, the dipeptidyl carboxypeptidase activity is strongly activated by chloride. The dipeptidyl carboxypeptidase activity is specifically inhibited by lisinopril, captopril and enalaprilat. Strongly inhibited by lisinopril and captopril. Functionally, dipeptidyl carboxypeptidase that removes dipeptides from the C-terminus of a variety of circulating hormones, such as angiotensin I, bradykinin or enkephalins, thereby playing a key role in the regulation of blood pressure, electrolyte homeostasis or synaptic plasticity. Composed of two similar catalytic domains, each possessing a functional active site, with different selectivity for substrates. Plays a major role in the angiotensin-renin system that regulates blood pressure and sodium retention by the kidney by converting angiotensin I to angiotensin II, resulting in an increase of the vasoconstrictor activity of angiotensin. Also able to inactivate bradykinin, a potent vasodilator, and therefore enhance the blood pressure response. Acts as a regulator of synaptic transmission by mediating cleavage of neuropeptide hormones, such as substance P, neurotensin or enkephalins. Catalyzes degradation of different enkephalin neuropeptides (Met-enkephalin, Leu-enkephalin, Met-enkephalin-Arg-Phe and possibly Met-enkephalin-Arg-Gly-Leu). Acts as a regulator of synaptic plasticity in the nucleus accumbens of the brain by mediating cleavage of Met-enkephalin-Arg-Phe, a strong ligand of Mu-type opioid receptor OPRM1, into Met-enkephalin. Met-enkephalin-Arg-Phe cleavage by ACE decreases activation of OPRM1, leading to long-term synaptic potentiation of glutamate release. Also acts as a regulator of hematopoietic stem cell differentiation by mediating degradation of hemoregulatory peptide N-acetyl-SDKP (AcSDKP). Acts as a regulator of cannabinoid signaling pathway by mediating degradation of hemopressin, an antagonist peptide of the cannabinoid receptor CNR1. Involved in amyloid-beta metabolism by catalyzing degradation of Amyloid-beta protein 40 and Amyloid-beta protein 42 peptides, thereby preventing plaque formation. Catalyzes cleavage of cholecystokinin (maturation of Cholecystokinin-8 and Cholecystokinin-5) and Gonadoliberin-1 (both maturation and degradation) hormones. Degradation of hemoregulatory peptide N-acetyl-SDKP (AcSDKP) and amyloid-beta proteins is mediated by the N-terminal catalytic domain, while angiotensin I and cholecystokinin cleavage is mediated by the C-terminal catalytic region. In terms of biological role, soluble form that is released in blood plasma and other body fluids following proteolytic cleavage in the juxtamembrane stalk region. Isoform produced by alternative promoter usage that is specifically expressed in spermatocytes and adult testis, and which is required for male fertility. In contrast to somatic isoforms, only contains one catalytic domain. Acts as a dipeptidyl carboxypeptidase that removes dipeptides from the C-terminus of substrates. The identity of substrates that are needed for male fertility is unknown. May also have a glycosidase activity which releases GPI-anchored proteins from the membrane by cleaving the mannose linkage in the GPI moiety. The GPIase activity was reported to be essential for the egg-binding ability of the sperm. This activity is however unclear and has been challenged by other groups, suggesting that it may be indirect. The sequence is that of Angiotensin-converting enzyme from Pan troglodytes (Chimpanzee).